Consider the following 267-residue polypeptide: uncharacterized protein (267 aa).

Phosphoserine occurs at positions 210 and 224.

Testis. Down-regulated in men with spermatocyte arrest.

Functionally, essential for normal spermatogenesis and male fertility. This is an uncharacterized protein from Homo sapiens (Human).